A 718-amino-acid chain; its full sequence is Scarecrow-like protein 9 (718 aa).

Residues 305–338 (VEKKKASDAQGGKRRARGRGRGRGRGGGGGQNGK) form a disordered region. The segment covering 316–328 (GKRRARGRGRGRG) has biased composition (basic residues). In terms of domain architecture, GRAS spans 335-713 (QNGKKEVVDL…RTVMALSVWK (379 aa)). Residues 342–402 (VDLRSLLIHC…EARLAGTGSQ (61 aa)) are leucine repeat I (LRI). Residues 421–484 (HQLFLACCPF…YGSPKVRITG (64 aa)) form a VHIID region. The VHIID signature appears at 452-456 (VHVID). Residues 500–532 (ETGQRLAAYAKLFGVPFEYKAIAKKWDAIQLED) form a leucine repeat II (LRII) region. Residues 541–635 (TVVNCLYRAE…MEVFGREALN (95 aa)) are PFYRE. Positions 638 to 713 (ACEGWERVER…RTVMALSVWK (76 aa)) are SAW.

This sequence belongs to the GRAS family. Expressed in cotyledons, leaves and flowers, and in the elongation zone in root.

Its subcellular location is the nucleus. Probable transcription factor involved in plant development. In Arabidopsis thaliana (Mouse-ear cress), this protein is Scarecrow-like protein 9 (SCL9).